Here is a 270-residue protein sequence, read N- to C-terminus: uncharacterized protein (270 aa).

This is an uncharacterized protein from Methanocaldococcus jannaschii (strain ATCC 43067 / DSM 2661 / JAL-1 / JCM 10045 / NBRC 100440) (Methanococcus jannaschii).